Reading from the N-terminus, the 191-residue chain is Ribosomal RNA small subunit methyltransferase G (191 aa).

Residues glycine 62, leucine 67, isoleucine 111 to glutamate 112, and arginine 124 each bind S-adenosyl-L-methionine.

This sequence belongs to the methyltransferase superfamily. RNA methyltransferase RsmG family.

The protein resides in the cytoplasm. It catalyses the reaction guanosine(527) in 16S rRNA + S-adenosyl-L-methionine = N(7)-methylguanosine(527) in 16S rRNA + S-adenosyl-L-homocysteine. Specifically methylates the N7 position of guanine in position 527 of 16S rRNA. This chain is Ribosomal RNA small subunit methyltransferase G, found in Rickettsia rickettsii (strain Sheila Smith).